The chain runs to 1292 residues: Zinc finger protein 423 (1292 aa).

Basic residues predominate over residues Met-1–Ser-11. Disordered stretches follow at residues Met-1–Asp-21, Ala-33–Glu-70, and Ala-95–Gln-125. Basic and acidic residues predominate over residues Glu-41–Asn-54. A phosphoserine mark is found at Ser-55 and Ser-58. The C2H2-type 1; degenerate zinc finger occupies Tyr-75 to Asp-101. Positions Trp-110–Gln-125 are enriched in polar residues. 7 C2H2-type zinc fingers span residues Tyr-146–His-168, Phe-174–His-196, Tyr-202–His-224, Phe-230–His-252, Phe-271–His-294, Leu-303–His-326, and His-331–His-353. The segment at Arg-354–Asp-407 is disordered. The span at Ser-371–Ser-385 shows a compositional bias: low complexity. A C2H2-type 9; degenerate zinc finger spans residues Tyr-417–His-441. C2H2-type zinc fingers lie at residues His-449–His-472, Phe-488–His-511, and Phe-525–His-548. The segment at Tyr-571–His-596 adopts a C2H2-type 13; atypical zinc-finger fold. The disordered stretch occupies residues Asn-598–Ile-635. A Phosphoserine modification is found at Ser-612. The segment covering Ser-612 to Pro-623 has biased composition (low complexity). 7 C2H2-type zinc fingers span residues Tyr-640–His-662, Gln-670–His-692, Tyr-700–His-723, Tyr-728–His-751, Tyr-758–His-781, His-789–His-811, and Tyr-815–His-838. The segment at Tyr-894–Asp-916 adopts a C2H2-type 21; degenerate zinc-finger fold. C2H2-type zinc fingers lie at residues His-938–His-960, Tyr-967–His-989, and Phe-1028–His-1050. Ser-1062 is subject to Phosphoserine. The C2H2-type 25; degenerate zinc-finger motif lies at Tyr-1072 to Leu-1090. C2H2-type zinc fingers lie at residues Leu-1128–His-1151, Tyr-1176–His-1198, His-1206–His-1228, Phe-1237–His-1260, and Tyr-1267–His-1290. The span at Glu-1144–Thr-1155 shows a compositional bias: basic and acidic residues. Positions Glu-1144 to Pro-1171 are disordered.

The protein belongs to the krueppel C2H2-type zinc-finger protein family. In terms of assembly, homodimer. Interacts with SMAD1 and SMAD4. Interacts with EBF1. Interacts with PARP1. Interacts with CEP290. In terms of tissue distribution, within the cerebellum, Zfp423 is expressed in both ventricular and external germinal zones. Transiently expressed in newly differentiating olfactory-receptor neurons.

The protein localises to the nucleus. Functionally, transcription factor that can both act as an activator or a repressor depending on the context. Plays a central role in BMP signaling and olfactory neurogenesis. Associates with SMADs in response to BMP2 leading to activate transcription of BMP target genes. Acts as a transcriptional repressor via its interaction with EBF1, a transcription factor involved in terminal olfactory receptor neurons differentiation; this interaction preventing EBF1 to bind DNA and activate olfactory-specific genes. Involved in olfactory neurogenesis by participating in a developmental switch that regulates the transition from differentiation to maturation in olfactory receptor neurons. Controls proliferation and differentiation of neural precursors in cerebellar vermis formation. The protein is Zinc finger protein 423 (Znf423) of Mus musculus (Mouse).